We begin with the raw amino-acid sequence, 478 residues long: Cysteine protease ATG4B (478 aa).

Polar residues predominate over residues 1 to 15 (MTSLPDRGVSSSSSD). The interval 1-20 (MTSLPDRGVSSSSSDPLCEG) is disordered. Cysteine 164 (nucleophile) is an active-site residue. Residues aspartate 361 and histidine 363 contribute to the active site.

This sequence belongs to the peptidase C54 family. As to quaternary structure, interacts with ATG8. As to expression, constitutively expressed.

The protein localises to the cytoplasm. The catalysed reaction is [protein]-C-terminal L-amino acid-glycyl-phosphatidylethanolamide + H2O = [protein]-C-terminal L-amino acid-glycine + a 1,2-diacyl-sn-glycero-3-phosphoethanolamine. Cysteine protease that plays a key role in autophagy by mediating both proteolytic activation and delipidation of ATG8 family proteins. The protease activity is required for proteolytic activation of ATG8 family proteins: cleaves the C-terminal amino acid of ATG8 proteins to reveal a C-terminal glycine. Exposure of the glycine at the C-terminus is essential for ATG8 proteins conjugation to phosphatidylethanolamine (PE) and insertion to membranes, which is necessary for autophagy. In addition to the protease activity, also mediates delipidation of PE-conjugated ATG8 proteins. The protein is Cysteine protease ATG4B (ATG4B) of Oryza sativa subsp. indica (Rice).